A 194-amino-acid polypeptide reads, in one-letter code: Fe/S biogenesis protein NfuA (194 aa).

Residues C152 and C155 each contribute to the [4Fe-4S] cluster site.

The protein belongs to the NfuA family. Homodimer. The cofactor is [4Fe-4S] cluster.

In terms of biological role, involved in iron-sulfur cluster biogenesis. Binds a 4Fe-4S cluster, can transfer this cluster to apoproteins, and thereby intervenes in the maturation of Fe/S proteins. Could also act as a scaffold/chaperone for damaged Fe/S proteins. The polypeptide is Fe/S biogenesis protein NfuA (Azotobacter vinelandii (strain DJ / ATCC BAA-1303)).